The following is a 508-amino-acid chain: Zinc finger CCCH-type with G patch domain-containing protein (508 aa).

Residues 154–177 form a C3H1-type zinc finger; the sequence is PCNYYLEGECRFDETRCRYSHGAL. Positions 253-279 are disordered; sequence DDELSSDSEETNETDGSDAANESDMDD. The region spanning 309–355 is the G-patch domain; it reads TRGIGSKLMASMGYIHGTGLGSDGRGIVTPVSAQILPQGRSLDACME. Residues 486–495 are compositionally biased toward polar residues; that stretch reads QAQESSLSKE. The tract at residues 486–508 is disordered; it reads QAQESSLSKEQQTRKSKNKMFEF. Basic residues predominate over residues 499 to 508; sequence RKSKNKMFEF.

The protein localises to the nucleus. Functionally, transcription repressor. This is Zinc finger CCCH-type with G patch domain-containing protein from Drosophila virilis (Fruit fly).